A 90-amino-acid polypeptide reads, in one-letter code: Potassium channel toxin BmTXK-beta (90 aa).

The signal sequence occupies residues 1–22; that stretch reads MMKQQFFLFLAVIVMISSVIEA. A propeptide spanning residues 23–29 is cleaved from the precursor; it reads GRGKEIM. A BetaSPN-type CS-alpha/beta domain is found at 55-90; the sequence is EYACPVIEKWCEDHCAAKKAIGKCEDTECKCLKLRK. 3 disulfides stabilise this stretch: Cys-58–Cys-78, Cys-65–Cys-83, and Cys-69–Cys-85.

The protein belongs to the long chain scorpion toxin family. Class 2 subfamily. As to expression, expressed by the venom gland.

It localises to the secreted. Functionally, this recombinant peptide reversibly and dose-dependently inhibits the transient outward potassium current (I(To)) of rabbit atrial myocyte and prolongs the action potential duration of rabbit atrial myocyte without affecting the action potential amplitude. Thus, the voltage-gated potassium channels Kv4.1/KCND1, Kv4.2/KCND2, Kv4.3/KCND3 may be the target of this toxin. This chain is Potassium channel toxin BmTXK-beta, found in Olivierus martensii (Manchurian scorpion).